The primary structure comprises 434 residues: Protein maelstrom homolog (434 aa).

Positions 4-73 (RKASRNAYYF…AQGKDSGPSE (70 aa)) form a DNA-binding region, HMG box. 2 disordered regions span residues 62-94 (RAAQ…KQNV) and 357-385 (SHFN…SGQN). Over residues 357-371 (SHFNSANQEQRSNTP) the composition is skewed to polar residues.

The protein belongs to the maelstrom family. Interacts with SMARCB1, SIN3B and DDX4. Interacts with piRNA-associated proteins TDRD1, PIWIL1 and PIWIL2. Interacts with TEX19.

The protein resides in the cytoplasm. Its subcellular location is the nucleus. Plays a central role during spermatogenesis by repressing transposable elements and preventing their mobilization, which is essential for the germline integrity. Acts via the piRNA metabolic process, which mediates the repression of transposable elements during meiosis by forming complexes composed of piRNAs and Piwi proteins and governs the methylation and subsequent repression of transposons. Its association with piP-bodies suggests a participation in the secondary piRNAs metabolic process. Required for the localization of germ-cell factors to the meiotic nuage. This is Protein maelstrom homolog (MAEL) from Macaca fascicularis (Crab-eating macaque).